We begin with the raw amino-acid sequence, 145 residues long: NADH-quinone oxidoreductase subunit A 1 (145 aa).

3 consecutive transmembrane segments (helical) span residues 18–38 (ILPL…LLLA), 71–91 (VPFY…VFIF), and 104–124 (GLIH…WLWL).

The protein belongs to the complex I subunit 3 family. In terms of assembly, NDH-1 is composed of 14 different subunits. Subunits NuoA, H, J, K, L, M, N constitute the membrane sector of the complex.

The protein resides in the cell inner membrane. The catalysed reaction is a quinone + NADH + 5 H(+)(in) = a quinol + NAD(+) + 4 H(+)(out). Its function is as follows. NDH-1 shuttles electrons from NADH, via FMN and iron-sulfur (Fe-S) centers, to quinones in the respiratory chain. The immediate electron acceptor for the enzyme in this species is believed to be ubiquinone. Couples the redox reaction to proton translocation (for every two electrons transferred, four hydrogen ions are translocated across the cytoplasmic membrane), and thus conserves the redox energy in a proton gradient. This Geotalea uraniireducens (strain Rf4) (Geobacter uraniireducens) protein is NADH-quinone oxidoreductase subunit A 1.